Consider the following 454-residue polypeptide: Bifunctional protein GlmU (454 aa).

The segment at 1-228 (MTLPLHVVIL…PQDVEGANDP (228 aa)) is pyrophosphorylase. UDP-N-acetyl-alpha-D-glucosamine contacts are provided by residues 10-13 (LAAG), Lys-24, Gln-76, 81-82 (GT), 103-105 (YGD), Gly-138, Glu-153, Asn-168, and Asn-226. Mg(2+) is bound at residue Asp-105. Asn-226 lines the Mg(2+) pocket. The interval 229 to 249 (WQLAQLERAWQLRAARALCLQ) is linker. An N-acetyltransferase region spans residues 250–454 (GVRMADPARV…IEGWERPKKK (205 aa)). Positions 332 and 350 each coordinate UDP-N-acetyl-alpha-D-glucosamine. Residue His-362 is the Proton acceptor of the active site. Residues Tyr-365 and Asn-376 each contribute to the UDP-N-acetyl-alpha-D-glucosamine site. Residues Ala-379, 385–386 (NY), Ser-404, Ala-422, and Arg-439 each bind acetyl-CoA.

It in the N-terminal section; belongs to the N-acetylglucosamine-1-phosphate uridyltransferase family. The protein in the C-terminal section; belongs to the transferase hexapeptide repeat family. In terms of assembly, homotrimer. It depends on Mg(2+) as a cofactor.

Its subcellular location is the cytoplasm. It catalyses the reaction alpha-D-glucosamine 1-phosphate + acetyl-CoA = N-acetyl-alpha-D-glucosamine 1-phosphate + CoA + H(+). The enzyme catalyses N-acetyl-alpha-D-glucosamine 1-phosphate + UTP + H(+) = UDP-N-acetyl-alpha-D-glucosamine + diphosphate. The protein operates within nucleotide-sugar biosynthesis; UDP-N-acetyl-alpha-D-glucosamine biosynthesis; N-acetyl-alpha-D-glucosamine 1-phosphate from alpha-D-glucosamine 6-phosphate (route II): step 2/2. It functions in the pathway nucleotide-sugar biosynthesis; UDP-N-acetyl-alpha-D-glucosamine biosynthesis; UDP-N-acetyl-alpha-D-glucosamine from N-acetyl-alpha-D-glucosamine 1-phosphate: step 1/1. Its pathway is bacterial outer membrane biogenesis; LPS lipid A biosynthesis. Catalyzes the last two sequential reactions in the de novo biosynthetic pathway for UDP-N-acetylglucosamine (UDP-GlcNAc). The C-terminal domain catalyzes the transfer of acetyl group from acetyl coenzyme A to glucosamine-1-phosphate (GlcN-1-P) to produce N-acetylglucosamine-1-phosphate (GlcNAc-1-P), which is converted into UDP-GlcNAc by the transfer of uridine 5-monophosphate (from uridine 5-triphosphate), a reaction catalyzed by the N-terminal domain. This chain is Bifunctional protein GlmU, found in Xanthomonas campestris pv. campestris (strain B100).